The primary structure comprises 188 residues: Mitochondrial import receptor subunit TOM20-1 (188 aa).

The Cytoplasmic portion of the chain corresponds to 1–164 (MDKLNFFEEI…VVKNKKSSDE (164 aa)). A helical membrane pass occupies residues 165-182 (KYIVMGWVILAIGVVACI). Residues 183–188 (SFRKLR) lie on the Mitochondrial intermembrane side of the membrane.

It belongs to the Tom20 family. As to quaternary structure, forms part of the preprotein translocase complex of the outer mitochondrial membrane (TOM complex) which consists of at least 6 different proteins (TOM5, TOM6, TOM7, TOM20, TOM22/TOM9 and TOM40). Component of a mitochondrial large protein complex that contains, at least, MIC60, DGS1, TOM40, TOM20 proteins, and petC/RISP. As to expression, barely detected in roots.

The protein localises to the mitochondrion outer membrane. Central component of the receptor complex responsible for the recognition and translocation of cytosolically synthesized mitochondrial preproteins. Together with TOM22 functions as the transit peptide receptor at the surface of the mitochondrion outer membrane and facilitates the movement of preproteins into the translocation pore. The sequence is that of Mitochondrial import receptor subunit TOM20-1 from Arabidopsis thaliana (Mouse-ear cress).